Consider the following 50-residue polypeptide: Large ribosomal subunit protein bL32A (50 aa).

Positions 1–19 are enriched in basic residues; the sequence is MAVPKRRKSRSNTRHRRSQ. The segment at 1–21 is disordered; sequence MAVPKRRKSRSNTRHRRSQWK.

Belongs to the bacterial ribosomal protein bL32 family.

The sequence is that of Large ribosomal subunit protein bL32A from Saccharopolyspora erythraea (strain ATCC 11635 / DSM 40517 / JCM 4748 / NBRC 13426 / NCIMB 8594 / NRRL 2338).